Reading from the N-terminus, the 1098-residue chain is Beta-alanine-activating enzyme (1098 aa).

Residues 198–206, Asp428, Arg442, and Lys527 each bind ATP; that span reads TSGTTGIPK. The Carrier domain occupies 553–630; the sequence is EDLWEKLQYL…EIYNHILQTV (78 aa). An O-(pantetheine 4'-phosphoryl)serine modification is found at Ser589. Phosphoserine is present on residues Ser649 and Ser724.

Belongs to the ATP-dependent AMP-binding enzyme family. Ubiquitously expressed in adult tissues.

Functionally, covalently binds beta-alanine in an ATP-dependent manner to form a thioester bond with its phosphopantetheine group and transfers it to an, as yet, unknown acceptor. May be required for a post-translational protein modification or for post-transcriptional modification of an RNA. In Homo sapiens (Human), this protein is Beta-alanine-activating enzyme (AASDH).